The chain runs to 278 residues: HTH-type transcriptional activator RhaS (278 aa).

The region spanning 174-272 (NLLLAWLEDH…NWSPRDIRQG (99 aa)) is the HTH araC/xylS-type domain. 2 DNA-binding regions (H-T-H motif) span residues 191 to 212 (DAVA…KQQT) and 239 to 262 (VTDI…RREF).

In terms of assembly, binds DNA as a dimer.

The protein resides in the cytoplasm. In terms of biological role, activates expression of the rhaBAD and rhaT operons. This Shigella dysenteriae serotype 1 (strain Sd197) protein is HTH-type transcriptional activator RhaS.